Consider the following 212-residue polypeptide: Ras-related protein Rab-43 (212 aa).

Residue 25-32 (GDASVGKT) coordinates GTP. Positions 47–55 (QGSTIGVDF) match the Effector region motif. Position 49 is a phosphoserine (S49). GTP is bound at residue 73–77 (DTAGQ). T82 is modified (phosphothreonine; by LRRK2). GTP-binding positions include 131 to 134 (NKSD) and 163 to 164 (AK). S193 carries the post-translational modification Phosphoserine. Residues C210 and C212 are each lipidated (S-geranylgeranyl cysteine). C212 is modified (cysteine methyl ester).

This sequence belongs to the small GTPase superfamily. Rab family. Interacts with GDI1, GDI2, CHM and CHML; phosphorylation at Thr-82 disrupts these interactions. As to expression, widely expressed in brain, testis, lung, heart, ovary, colon, kidney, uterus and spleen but not in liver.

It localises to the cytoplasmic vesicle. The protein localises to the phagosome. It is found in the phagosome membrane. Its subcellular location is the golgi apparatus. The protein resides in the trans-Golgi network membrane. It localises to the trans-Golgi network. The small GTPases Rab are key regulators of intracellular membrane trafficking, from the formation of transport vesicles to their fusion with membranes. Rabs cycle between an inactive GDP-bound form and an active GTP-bound form that is able to recruit to membranes different set of downstream effectors directly responsible for vesicle formation, movement, tethering and fusion. The low intrinsic GTPase activity of RAB43 is activated by USP6NL. Involved in retrograde transport from the endocytic pathway to the Golgi apparatus. Involved in the transport of Shiga toxin from early and recycling endosomes to the trans-Golgi network. Required for the structural integrity of the Golgi complex. Plays a role in the maturation of phagosomes that engulf pathogens, such as S.aureus and M.tuberculosis. This Homo sapiens (Human) protein is Ras-related protein Rab-43 (RAB43).